Here is a 663-residue protein sequence, read N- to C-terminus: ATP-dependent zinc metalloprotease FtsH (663 aa).

Residues 1–12 (MNKKETNTSWWR) are Stromal-facing. A helical transmembrane segment spans residues 13-33 (IILISLGISIICILAAFLAMK). At 34-135 (DGFFVLENNT…HPPKLDIFKT (102 aa)) the chain is on the lumenal side. A helical transmembrane segment spans residues 136-156 (ISDTLGSLIVPGLVVAVFYLF). Over 157-663 (LERANNNNNN…KIYESKFPKK (507 aa)) the chain is Stromal. The segment at 165–184 (NNNSNGSPFGPGGGPNQNMR) is disordered. 244 to 251 (GPPGTGKT) provides a ligand contact to ATP. Residue H465 participates in Zn(2+) binding. E466 is an active-site residue. H469 and D543 together coordinate Zn(2+).

This sequence in the central section; belongs to the AAA ATPase family. In the C-terminal section; belongs to the peptidase M41 family. As to quaternary structure, homohexamer. Zn(2+) serves as cofactor.

It is found in the plastid. It localises to the chloroplast thylakoid membrane. Its function is as follows. Acts as a processive, ATP-dependent zinc metallopeptidase. The chain is ATP-dependent zinc metalloprotease FtsH from Heterosigma akashiwo (strain NIES-293 / 8280G21-1).